A 454-amino-acid chain; its full sequence is MNTRRLFARSRLQLAFWYALVMGGILTLLGLGVYRAIVQANWMALEREVESIAGTLHDSLEPMLPSNASPTGVLQKMLPDLCLVNQPCQVNPTLIERHTLGISDRSLYYIRLFDYQGNLLAFSPNQPASLSSIFNQETWQTIHPPTGDRYRQFTTILHSAGNTDKSSWGYLQIGRSLAAFDAENKRILWILGLSFPIALGLVAFSSWGLAGLAMRPIYQSYQQQQQFTANAAHELRSPLASLLATVEAVLRIDSSHSPEINTMLHTVERQGRRLSQLITDLLLLSRLEQETTAEDWRLCCLNDLVSDLTEEFLELAIAAHIDLSSDLSSGEVYAWGNESQLYRLVSNLIANAIQYTTAGGRVDITLTSHEQMAIITVQDTGIGIAPDQQEHIFERFYRVNRDRSRKTGGTGLGLAIAQVITVKHRGSLTVESALGKGSLFTIQLPIFSVPIVHS.

At 1–13 (MNTRRLFARSRLQ) the chain is on the periplasmic side. The helical transmembrane segment at 14–34 (LAFWYALVMGGILTLLGLGVY) threads the bilayer. The Cytoplasmic portion of the chain corresponds to 35–186 (RAIVQANWMA…LAAFDAENKR (152 aa)). A helical membrane pass occupies residues 187-207 (ILWILGLSFPIALGLVAFSSW). At 208–454 (GLAGLAMRPI…PIFSVPIVHS (247 aa)) the chain is on the periplasmic side. The region spanning 230 to 448 (NAAHELRSPL…LFTIQLPIFS (219 aa)) is the Histidine kinase domain. Histidine 233 carries the post-translational modification Phosphohistidine; by autocatalysis.

It is found in the cell inner membrane. It carries out the reaction ATP + protein L-histidine = ADP + protein N-phospho-L-histidine.. Functionally, member of two-component regulatory system RppA/RppB, involved in the establishment of the appropriate stoichiometry between the 2 photosystems. It senses changes in the plastoquinone (PQ) redox poise. Another group shows this two-component pair, renamed NrsR/NrsS, controls the nickel-dependent expression of the nrsBACD operon; they suggest the photosystem-related activities seen earlier are due to the expression of NrsS (RppB) in the absence of its natural substrate NrsR (RppA). The polypeptide is Sensor histidine kinase RppB (Synechocystis sp. (strain ATCC 27184 / PCC 6803 / Kazusa)).